The following is a 369-amino-acid chain: 3,7-dimethylxanthine N-methyltransferase TCS1 (369 aa).

Position 24 (Tyr-24) interacts with S-adenosyl-L-homocysteine. Caffeine is bound at residue Thr-31. Residues Cys-66, Asn-71, Asp-103, Leu-104, Ser-138, and Phe-139 each contribute to the S-adenosyl-L-homocysteine site. Tyr-156, His-159, and Trp-160 together coordinate caffeine. Asn-177 lines the Mg(2+) pocket. Arg-225 lines the caffeine pocket. Asp-263, Phe-265, and Asn-266 together coordinate Mg(2+). Caffeine is bound at residue Phe-321.

Belongs to the methyltransferase superfamily. Type-7 methyltransferase family. The cofactor is Mg(2+). In terms of tissue distribution, expressed in young leaves and flowers.

The enzyme catalyses 7-methylxanthine + S-adenosyl-L-methionine = theobromine + S-adenosyl-L-homocysteine + H(+). The catalysed reaction is theobromine + S-adenosyl-L-methionine = caffeine + S-adenosyl-L-homocysteine + H(+). It catalyses the reaction 1,7-dimethylxanthine + S-adenosyl-L-methionine = caffeine + S-adenosyl-L-homocysteine + H(+). It functions in the pathway alkaloid biosynthesis. Its function is as follows. Involved in the biosynthesis of caffeine. Catalyzes the conversion of 7-methylxanthine (7mX) to theobromine and of theobromine to caffeine. Has 3-N- and 1-N-methylation activity. This Camellia sinensis (Tea plant) protein is 3,7-dimethylxanthine N-methyltransferase TCS1.